We begin with the raw amino-acid sequence, 434 residues long: Glutamyl-tRNA reductase (434 aa).

Residues 52 to 55, S115, 120 to 122, and Q126 each bind substrate; these read TCNR and ETQ. C53 acts as the Nucleophile in catalysis. 195-200 contributes to the NADP(+) binding site; sequence GAGEMI.

It belongs to the glutamyl-tRNA reductase family. Homodimer.

The enzyme catalyses (S)-4-amino-5-oxopentanoate + tRNA(Glu) + NADP(+) = L-glutamyl-tRNA(Glu) + NADPH + H(+). The protein operates within porphyrin-containing compound metabolism; protoporphyrin-IX biosynthesis; 5-aminolevulinate from L-glutamyl-tRNA(Glu): step 1/2. In terms of biological role, catalyzes the NADPH-dependent reduction of glutamyl-tRNA(Glu) to glutamate 1-semialdehyde (GSA). This chain is Glutamyl-tRNA reductase, found in Cupriavidus pinatubonensis (strain JMP 134 / LMG 1197) (Cupriavidus necator (strain JMP 134)).